The chain runs to 204 residues: Signal peptidase I (204 aa).

Over 1-10 (MNSFKNFLKE) the chain is Cytoplasmic. A helical membrane pass occupies residues 11 to 30 (WGLFLLILSLLALSRIFFWS). Over 31–204 (NVRVEGHSMD…LWPITRIGTF (174 aa)) the chain is Extracellular. Residues S38 and K76 contribute to the active site.

This sequence belongs to the peptidase S26 family.

It is found in the cell membrane. It catalyses the reaction Cleavage of hydrophobic, N-terminal signal or leader sequences from secreted and periplasmic proteins.. The sequence is that of Signal peptidase I (lepB) from Streptococcus pneumoniae serotype 4 (strain ATCC BAA-334 / TIGR4).